Consider the following 299-residue polypeptide: Phosphatidylcholine-sterol acyltransferase (299 aa).

N-linked (GlcNAc...) asparagine glycosylation is present at asparagine 30. The active-site Nucleophile is serine 127. A glycan (N-linked (GlcNAc...) asparagine) is linked at asparagine 185. A disulfide bridge connects residues cysteine 226 and cysteine 269. Active-site charge relay system residues include aspartate 258 and histidine 290.

Belongs to the AB hydrolase superfamily. Lipase family.

The protein localises to the secreted. The enzyme catalyses a sterol + a 1,2-diacyl-sn-glycero-3-phosphocholine = a sterol ester + a 1-acyl-sn-glycero-3-phosphocholine. With respect to regulation, APOA1 is the most potent activator in plasma. Also activated by APOE, APOC1 and APOA4. Functionally, central enzyme in the extracellular metabolism of plasma lipoproteins. Synthesized mainly in the liver and secreted into plasma where it converts cholesterol and phosphatidylcholines (lecithins) to cholesteryl esters and lysophosphatidylcholines on the surface of high and low density lipoproteins (HDLs and LDLs). The cholesterol ester is then transported back to the liver. Has a preference for plasma 16:0-18:2 or 18:O-18:2 phosphatidylcholines. Also produced in the brain by primary astrocytes, and esterifies free cholesterol on nascent APOE-containing lipoproteins secreted from glia and influences cerebral spinal fluid (CSF) APOE- and APOA1 levels. Together with APOE and the cholesterol transporter ABCA1, plays a key role in the maturation of glial-derived, nascent lipoproteins. Required for remodeling high-density lipoprotein particles into their spherical forms. In Eliomys quercinus (Garden dormouse), this protein is Phosphatidylcholine-sterol acyltransferase (LCAT).